Consider the following 482-residue polypeptide: Proline--tRNA ligase (482 aa).

Belongs to the class-II aminoacyl-tRNA synthetase family. ProS type 3 subfamily. Homodimer.

The protein resides in the cytoplasm. The catalysed reaction is tRNA(Pro) + L-proline + ATP = L-prolyl-tRNA(Pro) + AMP + diphosphate. In terms of biological role, catalyzes the attachment of proline to tRNA(Pro) in a two-step reaction: proline is first activated by ATP to form Pro-AMP and then transferred to the acceptor end of tRNA(Pro). The chain is Proline--tRNA ligase from Mycoplasmopsis synoviae (strain 53) (Mycoplasma synoviae).